A 211-amino-acid polypeptide reads, in one-letter code: Peptidyl-tRNA hydrolase (211 aa).

Residue Tyr17 coordinates tRNA. His22 acts as the Proton acceptor in catalysis. TRNA contacts are provided by Phe79, Asn81, and Asn127.

It belongs to the PTH family. As to quaternary structure, monomer.

It localises to the cytoplasm. The enzyme catalyses an N-acyl-L-alpha-aminoacyl-tRNA + H2O = an N-acyl-L-amino acid + a tRNA + H(+). Functionally, hydrolyzes ribosome-free peptidyl-tRNAs (with 1 or more amino acids incorporated), which drop off the ribosome during protein synthesis, or as a result of ribosome stalling. Catalyzes the release of premature peptidyl moieties from peptidyl-tRNA molecules trapped in stalled 50S ribosomal subunits, and thus maintains levels of free tRNAs and 50S ribosomes. This Solidesulfovibrio magneticus (strain ATCC 700980 / DSM 13731 / RS-1) (Desulfovibrio magneticus) protein is Peptidyl-tRNA hydrolase.